A 527-amino-acid chain; its full sequence is Catalase (527 aa).

Residues 1-22 (MADSRDPASDQMKHWKEERAAQ) show a composition bias toward basic and acidic residues. The segment at 1–32 (MADSRDPASDQMKHWKEERAAQKPDVLTTAGG) is disordered. Alanine 2 carries the N-acetylalanine modification. Serine 9 is modified (phosphoserine). Lysine 13 carries the N6-succinyllysine modification. Active-site residues include histidine 75 and asparagine 148. Positions 194, 201, 203, and 213 each coordinate NADP(+). The residue at position 221 (lysine 221) is an N6-succinyllysine. An N6-acetyllysine modification is found at lysine 233. Positions 237, 303, 305, and 306 each coordinate NADP(+). N6-acetyllysine; alternate is present on lysine 306. The residue at position 306 (lysine 306) is an N6-succinyllysine; alternate. A heme-binding site is contributed by tyrosine 358. A Phosphoserine modification is found at serine 434. Lysine 480 is subject to N6-acetyllysine; alternate. The residue at position 480 (lysine 480) is an N6-succinyllysine; alternate. Lysine 499 is subject to N6-acetyllysine. The residue at position 511 (threonine 511) is a Phosphothreonine. Position 517 is a phosphoserine (serine 517). Residue lysine 522 is modified to N6-succinyllysine. Residues 524–527 (KANL) carry the Microbody targeting signal; atypical motif.

Belongs to the catalase family. In terms of assembly, homotetramer. Interacts (via microbody targeting signal) with PEX5, monomeric form interacts with PEX5, leading to its translocation into peroxisomes. It depends on heme as a cofactor. Requires NADP(+) as cofactor.

It localises to the peroxisome matrix. It catalyses the reaction 2 H2O2 = O2 + 2 H2O. Functionally, catalyzes the degradation of hydrogen peroxide (H(2)O(2)) generated by peroxisomal oxidases to water and oxygen, thereby protecting cells from the toxic effects of hydrogen peroxide. Promotes growth of cells including T-cells, B-cells, myeloid leukemia cells, melanoma cells, mastocytoma cells and normal and transformed fibroblast cells. The sequence is that of Catalase (CAT) from Cavia porcellus (Guinea pig).